A 304-amino-acid polypeptide reads, in one-letter code: UTP--glucose-1-phosphate uridylyltransferase 1 (304 aa).

This sequence belongs to the UDPGP type 2 family.

It carries out the reaction alpha-D-glucose 1-phosphate + UTP + H(+) = UDP-alpha-D-glucose + diphosphate. It participates in carbohydrate metabolism; nucleotide-sugar metabolism. The protein is UTP--glucose-1-phosphate uridylyltransferase 1 (hasC1) of Streptococcus pyogenes serotype M1.